Consider the following 289-residue polypeptide: 4-diphosphocytidyl-2-C-methyl-D-erythritol kinase (289 aa).

Lysine 11 is a catalytic residue. Residue proline 93–alanine 103 coordinates ATP. The active site involves aspartate 135.

This sequence belongs to the GHMP kinase family. IspE subfamily.

The catalysed reaction is 4-CDP-2-C-methyl-D-erythritol + ATP = 4-CDP-2-C-methyl-D-erythritol 2-phosphate + ADP + H(+). Its pathway is isoprenoid biosynthesis; isopentenyl diphosphate biosynthesis via DXP pathway; isopentenyl diphosphate from 1-deoxy-D-xylulose 5-phosphate: step 3/6. Catalyzes the phosphorylation of the position 2 hydroxy group of 4-diphosphocytidyl-2C-methyl-D-erythritol. This chain is 4-diphosphocytidyl-2-C-methyl-D-erythritol kinase, found in Thermoanaerobacter pseudethanolicus (strain ATCC 33223 / 39E) (Clostridium thermohydrosulfuricum).